Reading from the N-terminus, the 727-residue chain is MPPPADIVKVAIEWPGAYPKLMEIDQKKPLSAIIKEVCDGWSLANHEYFALQHADSSNFYITEKNRNEIKNGTILRLTTSPAQNAQQLHERIQSSSMDAKLEALKDLASLSRDVTFAQEFINLDGISLLTQMVESGTERYQKLQKIMKPCFGDMLSFTLTAFVELMDHGIVSWDTFSVAFIKKIASFVNKSAIDISILQRSLAILESMVLNSHDLYQKVAQEITIGQLIPHLQGSDQEIQTYTIAVINALFLKAPDERRQEMANILAQKQLRSIILTHVIRAQRAINNEMAHQLYVLQVLTFNLLEDRMMTKMDPQDQAQRDIIFELRRIAFDAESEPNNSSGSMEKRKSMYTRDYKKLGFINHVNPAMDFTQTPPGMLALDNMLYFAKHHQDAYIRIVLENSSREDKHECPFGRSSIELTKMLCEILKVGELPSETCNDFHPMFFTHDRSFEEFFCICIQLLNKTWKEMRATSEDFNKVMQVVKEQVMRALTTKPSSLDQFKSKLQNLSYTEILKIRQSERMNQEDFQSRPILELKEKIQPEILELIKQQRLNRLVEGTCFRKLNARRRQDKFWYCRLSPNHKVLHYGDLEESPQGEVPHDSLQDKLPVADIKAVVTGKDCPHMKEKGALKQNKEVLELAFSILYDSNCQLNFIAPDKHEYCIWTDGLNALLGKDMMSDLTRNDLDTLLSMEIKLRLLDLENIQIPDAPPPIPKEPSNYDFVYDCN.

Y18 is subject to Phosphotyrosine; by HCK. N6-acetyllysine occurs at positions 100 and 105. A Phosphotyrosine; by HCK modification is found at Y216. The ELMO domain occupies 319–492 (AQRDIIFELR…VVKEQVMRAL (174 aa)). S344 is subject to Phosphoserine. Phosphotyrosine; by HCK is present on residues Y395 and Y511. Positions 555–676 (RLVEGTCFRK…DGLNALLGKD (122 aa)) constitute a PH domain. Positions 707 to 714 (PDAPPPIP) match the SH3-binding motif. Y720 is modified (phosphotyrosine; by HCK).

In terms of assembly, interacts with ADGRB1. Interacts directly with the SH3-domain of DOCK1 via its SH3-binding site. Part of a complex with DOCK1 and RAC1. Part of a complex with DOCK1 and CRK isoform CRK-II. Interacts with PLEKHG6. Interacts with HCK (via SH3 domain). Interacts with ADGRB3. Interacts with DOCK5. Phosphorylated by HCK. As to expression, widely expressed, with a higher expression in the spleen and placenta.

The protein resides in the cytoplasm. It localises to the cell membrane. Functionally, involved in cytoskeletal rearrangements required for phagocytosis of apoptotic cells and cell motility. Acts in association with DOCK1 and CRK. Was initially proposed to be required in complex with DOCK1 to activate Rac Rho small GTPases. May enhance the guanine nucleotide exchange factor (GEF) activity of DOCK1. In Homo sapiens (Human), this protein is Engulfment and cell motility protein 1 (ELMO1).